Consider the following 308-residue polypeptide: Uricase (308 aa).

Active-site charge relay system residues include K5 and T65. Positions 65, 66, 177, 194, 242, 243, and 269 each coordinate urate. Residues 283 to 308 (ASVLREPPAPTGFQQFSMDRGDLDEQ) are disordered.

The protein belongs to the uricase family.

It carries out the reaction urate + O2 + H2O = 5-hydroxyisourate + H2O2. It functions in the pathway purine metabolism; urate degradation; (S)-allantoin from urate: step 1/3. Catalyzes the oxidation of uric acid to 5-hydroxyisourate, which is further processed to form (S)-allantoin. This is Uricase from Haloferax volcanii (strain ATCC 29605 / DSM 3757 / JCM 8879 / NBRC 14742 / NCIMB 2012 / VKM B-1768 / DS2) (Halobacterium volcanii).